The primary structure comprises 392 residues: Casein kinase II subunit alpha (392 aa).

Positions 39–324 (YQLVRKLGRG…AREAMDHPYF (286 aa)) constitute a Protein kinase domain. Residues 45 to 53 (LGRGKYSEV) and K68 contribute to the ATP site. D156 acts as the Proton acceptor in catalysis. The interval 334–355 (MGGSNMPSGSSTPVSSASMMSG) is disordered. Residues 337 to 354 (SNMPSGSSTPVSSASMMS) are compositionally biased toward low complexity.

The protein belongs to the protein kinase superfamily. Ser/Thr protein kinase family. CK2 subfamily. As to quaternary structure, tetramer composed of an alpha chain, an alpha' and two beta chains.

The protein localises to the nucleus. It catalyses the reaction L-seryl-[protein] + ATP = O-phospho-L-seryl-[protein] + ADP + H(+). The enzyme catalyses L-threonyl-[protein] + ATP = O-phospho-L-threonyl-[protein] + ADP + H(+). Functionally, catalytic subunit of a constitutively active serine/threonine-protein kinase complex that phosphorylates a large number of substrates containing acidic residues C-terminal to the phosphorylated serine or threonine. Regulates numerous cellular processes, such as cell cycle progression, apoptosis and transcription, as well as viral infection. May act as a regulatory node which integrates and coordinates numerous signals leading to an appropriate cellular response. During mitosis, functions as a component of the p53/TP53-dependent spindle assembly checkpoint (SAC) that maintains cyclin-B-CDK1 activity and G2 arrest in response to spindle damage. Can also negatively regulate apoptosis. Phosphorylates the caspases CASP9 and CASP2 and the apoptotic regulator NOL3. Phosphorylation protects CASP9 from cleavage and activation by CASP8, and inhibits the dimerization of CASP2 and activation of CASP8. Plays an important role in the circadian clock function by phosphorylating BMAL1. This chain is Casein kinase II subunit alpha (csnk2a1), found in Xenopus laevis (African clawed frog).